The following is a 566-amino-acid chain: Bacillolysin (566 aa).

Residues 1-27 form the signal peptide; sequence MKKKSLALVLATGMAVTTFGGTGSAFA. Positions 28 to 249 are cleaved as a propeptide — activation peptide; the sequence is DSKNVLSTKK…KQDAKAVVKP (222 aa). Ca(2+) contacts are provided by Asp307, Asp309, Val311, and Asp388. Residue His392 coordinates Zn(2+). Glu393 is a catalytic residue. The Zn(2+) site is built by His396 and Glu416. Ca(2+) contacts are provided by Glu427, Asn433, Asp435, Glu437, Glu440, Tyr443, Thr444, Lys447, and Asp450. His481 (proton donor) is an active-site residue.

This sequence belongs to the peptidase M4 family. The cofactor is Ca(2+). Requires Zn(2+) as cofactor.

The protein resides in the secreted. It carries out the reaction Similar, but not identical, to that of thermolysin.. Functionally, extracellular zinc metalloprotease. The protein is Bacillolysin (npr) of Bacillus cereus.